Here is a 627-residue protein sequence, read N- to C-terminus: (-)-alpha-pinene synthase 1, chloroplastic (627 aa).

Residues 1-36 constitute a chloroplast transit peptide; sequence MALVSIAPLASKSCLHKSLSSSAHELKTICRTIPTL. Residues D378, D382, and D530 each contribute to the Mg(2+) site. Positions 378–382 match the DDXXD motif motif; it reads DDMYD.

This sequence belongs to the terpene synthase family. Tpsd subfamily. Mg(2+) serves as cofactor. Mn(2+) is required as a cofactor.

It localises to the plastid. It is found in the chloroplast. It carries out the reaction (2E)-geranyl diphosphate = (1S,5S)-beta-pinene + diphosphate. The enzyme catalyses (2E)-geranyl diphosphate = (1S,5S)-alpha-pinene + diphosphate. It participates in terpene metabolism; oleoresin biosynthesis. Its function is as follows. Terpene synthase (TPS) involved in the biosynthesis of monoterpene natural products included in conifer oleoresin secretions and volatile emissions; these compounds contribute to biotic and abiotic stress defense against herbivores and pathogens. Catalyzes the conversion of (2E)-geranyl diphosphate (GPP) to (1S,5S)-beta-pinene. This chain is (-)-alpha-pinene synthase 1, chloroplastic, found in Picea sitchensis (Sitka spruce).